The chain runs to 389 residues: Aminomethyltransferase (389 aa).

Belongs to the GcvT family. The glycine cleavage system is composed of four proteins: P, T, L and H.

It carries out the reaction N(6)-[(R)-S(8)-aminomethyldihydrolipoyl]-L-lysyl-[protein] + (6S)-5,6,7,8-tetrahydrofolate = N(6)-[(R)-dihydrolipoyl]-L-lysyl-[protein] + (6R)-5,10-methylene-5,6,7,8-tetrahydrofolate + NH4(+). Functionally, the glycine cleavage system catalyzes the degradation of glycine. In Corynebacterium jeikeium (strain K411), this protein is Aminomethyltransferase.